A 440-amino-acid chain; its full sequence is Endoplasmic reticulum junction formation protein lunapark (440 aa).

Residues M1–R45 lie on the Cytoplasmic side of the membrane. Residues E16–K40 are a coiled coil. A helical transmembrane segment spans residues L46–L66. The Lumenal segment spans residues P67 to T77. A helical membrane pass occupies residues L78–F98. Topologically, residues S99–E440 are cytoplasmic. Positions R100 to T128 form a coiled coil. Residues L149 to R169 are disordered. Residue T159 is modified to Phosphothreonine. A phosphoserine mark is found at S177, S179, S188, and S192. At T198 the chain carries Phosphothreonine. Residues Q202–P247 are disordered. Phosphoserine occurs at positions 206 and 215. A compositionally biased stretch (polar residues) spans V216 to L225. T219 is subject to Phosphothreonine. Phosphoserine is present on residues S222 and S231. Residues C280–C305 form a C4-type; plays a role in ER morphology zinc finger. The segment at P316–E440 is disordered. S325 is modified (phosphoserine). The span at D334 to Q343 shows a compositional bias: polar residues. 2 stretches are compositionally biased toward acidic residues: residues Q370 to E411 and E431 to E440.

It belongs to the lunapark family. In terms of assembly, homodimer; homodimerization requires the C4-type zinc finger motif and decreases during mitosis in a phosphorylation-dependent manner. Post-translationally, phosphorylated. Phosphorylation at Thr-159 and Ser-325 occurs during interphase. Phosphorylation at Ser-177, Ser-179, Ser-188, Ser-192, Thr-198, Ser-206, Ser-215, Thr-219, Ser-222 and Ser-231 occurs during mitosis; these phosphorylations reduce both its homodimerization and the ER three-way tubular junction formation.

The protein localises to the endoplasmic reticulum membrane. In terms of biological role, endoplasmic reticulum (ER)-shaping membrane protein that plays a role in determining ER morphology. Involved in the stabilization of nascent three-way ER tubular junctions within the ER network. May also play a role as a curvature-stabilizing protein within three-way ER tubular junction network. This chain is Endoplasmic reticulum junction formation protein lunapark (lnpk), found in Xenopus laevis (African clawed frog).